The primary structure comprises 233 residues: 5'-methylthioadenosine/S-adenosylhomocysteine nucleosidase (233 aa).

Catalysis depends on E12, which acts as the Proton acceptor. Residues G78, I152, and 173-174 (ME) each bind substrate. D197 functions as the Proton donor in the catalytic mechanism.

Belongs to the PNP/UDP phosphorylase family. MtnN subfamily. Homodimer.

It carries out the reaction S-adenosyl-L-homocysteine + H2O = S-(5-deoxy-D-ribos-5-yl)-L-homocysteine + adenine. The enzyme catalyses S-methyl-5'-thioadenosine + H2O = 5-(methylsulfanyl)-D-ribose + adenine. The catalysed reaction is 5'-deoxyadenosine + H2O = 5-deoxy-D-ribose + adenine. Its pathway is amino-acid biosynthesis; L-methionine biosynthesis via salvage pathway; S-methyl-5-thio-alpha-D-ribose 1-phosphate from S-methyl-5'-thioadenosine (hydrolase route): step 1/2. In terms of biological role, catalyzes the irreversible cleavage of the glycosidic bond in both 5'-methylthioadenosine (MTA) and S-adenosylhomocysteine (SAH/AdoHcy) to adenine and the corresponding thioribose, 5'-methylthioribose and S-ribosylhomocysteine, respectively. Also cleaves 5'-deoxyadenosine, a toxic by-product of radical S-adenosylmethionine (SAM) enzymes, into 5-deoxyribose and adenine. Thus, is required for in vivo function of the radical SAM enzymes biotin synthase and lipoic acid synthase, that are inhibited by 5'-deoxyadenosine accumulation. The sequence is that of 5'-methylthioadenosine/S-adenosylhomocysteine nucleosidase from Yersinia pestis bv. Antiqua (strain Angola).